The sequence spans 230 residues: Large ribosomal subunit protein uL1 (230 aa).

This sequence belongs to the universal ribosomal protein uL1 family. As to quaternary structure, part of the 50S ribosomal subunit.

Its function is as follows. Binds directly to 23S rRNA. The L1 stalk is quite mobile in the ribosome, and is involved in E site tRNA release. Protein L1 is also a translational repressor protein, it controls the translation of the L11 operon by binding to its mRNA. This is Large ribosomal subunit protein uL1 from Bradyrhizobium sp. (strain BTAi1 / ATCC BAA-1182).